Here is a 227-residue protein sequence, read N- to C-terminus: UPF0688 protein C1orf174 homolog (227 aa).

2 disordered regions span residues Met-1–Leu-122 and Ala-207–Ile-227. Residues Thr-47–Val-63 are compositionally biased toward basic and acidic residues. Polar residues-rich tracts occupy residues Ala-77–Arg-104 and Arg-113–Leu-122.

This sequence belongs to the UPF0688 family.

Its subcellular location is the nucleus. In Xenopus tropicalis (Western clawed frog), this protein is UPF0688 protein C1orf174 homolog.